The sequence spans 427 residues: Beta-1,3-galactosyl-O-glycosyl-glycoprotein beta-1,6-N-acetylglucosaminyltransferase (427 aa).

Residues 1–9 (MLRKLWRRK) lie on the Cytoplasmic side of the membrane. The mediates interaction with GOLPH3 and is necessary and sufficient for localization to the Golgi stretch occupies residues 5 to 9 (LWRRK). A helical; Signal-anchor for type II membrane protein membrane pass occupies residues 10–32 (LFSFPTKYYFLFLAFSVVTFTVL). The stem region stretch occupies residues 33–121 (RIHQKTEFVN…EPLSKEEAGF (89 aa)). The Lumenal portion of the chain corresponds to 33–427 (RIHQKTEFVN…RHKALETLKP (395 aa)). Residues Asn-58 and Asn-95 are each glycosylated (N-linked (GlcNAc...) asparagine). 4 disulfide bridges follow: Cys-59-Cys-412, Cys-100-Cys-172, Cys-151-Cys-199, and Cys-372-Cys-380. The catalytic stretch occupies residues 122–427 (PIAYSIVVHH…RHKALETLKP (306 aa)). UDP-N-acetyl-alpha-D-glucosamine is bound by residues 128–130 (VVH), 155–157 (DAK), and Tyr-187. Glu-243, Lys-251, Arg-254, Glu-320, Lys-341, and Tyr-358 together coordinate a glycoprotein. Glu-320 acts as the Nucleophile in catalysis. The UDP-N-acetyl-alpha-D-glucosamine site is built by Arg-377 and Lys-400.

It belongs to the glycosyltransferase 14 family. As to quaternary structure, interacts with GOLPH3; may control GCNT1 retention in the Golgi. In terms of tissue distribution, expressed in tracheal submucosal glands and epithelium (at protein level).

It localises to the golgi apparatus membrane. The catalysed reaction is a 3-O-[beta-D-galactosyl-(1-&gt;3)-N-acetyl-alpha-D-galactosaminyl]-L-seryl-[protein] + UDP-N-acetyl-alpha-D-glucosamine = 3-O-{beta-D-galactosyl-(1-&gt;3)-[N-acetyl-beta-D-glucosaminyl-(1-&gt;6)]-N-acetyl-alpha-D-galactosaminyl}-L-seryl-[protein] + UDP + H(+). The enzyme catalyses a 3-O-[beta-D-galactosyl-(1-&gt;3)-N-acetyl-alpha-D-galactosaminyl]-L-threonyl-[protein] + UDP-N-acetyl-alpha-D-glucosamine = a 3-O-{beta-D-galactosyl-(1-&gt;3)-[N-acetyl-beta-D-glucosaminyl-(1-&gt;6)]-N-acetyl-alpha-D-galactosaminyl}-L-threonyl-[protein] + UDP + H(+). It catalyses the reaction a globoside GalGb4Cer + UDP-N-acetyl-alpha-D-glucosamine = a globoside GlcNAc-(beta1-&gt;6)-GalGb4Cer + UDP + H(+). It carries out the reaction a ganglioside GA1 + UDP-N-acetyl-alpha-D-glucosamine = a ganglioside beta-D-GlcNAc-(1-&gt;6)-GA1 + UDP + H(+). It functions in the pathway protein modification; protein glycosylation. It participates in glycolipid biosynthesis. Functionally, glycosyltransferase that catalyzes the transfer of an N-acetylglucosamine (GlcNAc) moiety in beta1-6 linkage from UDP-GlcNAc onto mucin-type core 1 O-glycan to form the branched mucin-type core 2 O-glycan. The catalysis is metal ion-independent and occurs with inversion of the anomeric configuration of sugar donor. Selectively involved in synthesis of mucin-type core 2 O-glycans that serve as scaffolds for the display of selectin ligand sialyl Lewis X epitope by myeloid cells, with an impact on homeostasis and recruitment to inflammatory sites. Can also act on glycolipid substrates. Transfers GlcNAc moiety to GalGb4Cer globosides in a reaction step to the synthesis of stage-specific embryonic antigen 1 (SSEA-1) determinant. Can use Galbeta1-3GalNAcalpha1- and Galbeta1-3GalNAcbeta1- oligosaccharide derivatives as acceptor substrates. The protein is Beta-1,3-galactosyl-O-glycosyl-glycoprotein beta-1,6-N-acetylglucosaminyltransferase (GCNT1) of Bos taurus (Bovine).